Consider the following 1088-residue polypeptide: DNA mismatch repair protein MutS (1088 aa).

The tract at residues 498–579 (PLDGITPPDD…SFEMPSLHGH (82 aa)) is disordered. The segment covering 537-546 (DLFDEEEEQE) has biased composition (acidic residues). An ATP-binding site is contributed by 816-823 (GPNMSGKS). Residues 1000 to 1048 (LERRAPRSTPQPAPERTEERPAAGRPTARSHSAARGDPPRAPDGQLSLF) are disordered.

Belongs to the DNA mismatch repair MutS family.

This protein is involved in the repair of mismatches in DNA. It is possible that it carries out the mismatch recognition step. This protein has a weak ATPase activity. This chain is DNA mismatch repair protein MutS, found in Roseiflexus castenholzii (strain DSM 13941 / HLO8).